A 695-amino-acid polypeptide reads, in one-letter code: Follicle-stimulating hormone receptor (695 aa).

The signal sequence occupies residues 1–17; that stretch reads MSLLLVSLLAFLTLGSG. 2 disulfides stabilise this stretch: C18-C25 and C23-C32. The 29-residue stretch at 18 to 46 folds into the LRRNT domain; sequence CHHRICHCSNGVFLCQESKVTEIPPDLPR. The Extracellular segment spans residues 18–366; it reads CHHRICHCSN…EDIMGHDILR (349 aa). 9 LRR repeats span residues 49–72, 73–97, 98–118, 119–143, 144–169, 170–192, 193–216, 217–240, and 241–259; these read VELRFVLTKLRVIPKGAFSGFGDL, EKIEISQNDVLEVIEANVFSNLPKL, HEIRIEKANNLLYIDPDAFQN, LPNLRYLLISNTGVKHLPAVHKIQS, LQKVLLDIQDNINIHTVERNSFVGLS, FESMILWLSKNGIREIHNCAFNG, TQLDELNLSDNDNLEELPNDVFQG, ASGPVILDISRTRIHSLPSYGLEN, and LKKLRAKSTYNLKKLPSLE. N-linked (GlcNAc...) asparagine glycans are attached at residues N191 and N199. Intrachain disulfides connect C275-C346, C276-C292, C276-C356, and C292-C338. A glycan (N-linked (GlcNAc...) asparagine) is linked at N293. Y335 bears the Sulfotyrosine mark. A helical membrane pass occupies residues 367 to 387; the sequence is VLIWFISILAITGNIIVLVIL. Over 388-398 the chain is Cytoplasmic; that stretch reads ITSQYKLTVPR. Residues 399–421 form a helical membrane-spanning segment; it reads FLMCNLAFADLCIGIYLLLIASV. At 422–443 the chain is on the extracellular side; that stretch reads DIHTKTQYHNYAIDWQTGAGCD. C442 and C517 are disulfide-bonded. Residues 444-465 traverse the membrane as a helical segment; the sequence is AAGFFTVFASELSVYTLTAITL. Residues 466–485 are Cytoplasmic-facing; sequence ERWHTITHAMQLQCKVQLRH. The chain crosses the membrane as a helical span at residues 486 to 508; sequence AASIMLVGWIFAFTVALFPIFGI. The Extracellular segment spans residues 509–528; that stretch reads SSYMKVSICLPMDIDSPLSQ. A helical transmembrane segment spans residues 529 to 550; the sequence is LYVVSLLVLNVLAFVVICGCYT. Topologically, residues 551–573 are cytoplasmic; the sequence is HIYLTVRNPNIMSSSSDTKIAKR. Residues 574 to 597 form a helical membrane-spanning segment; sequence MAMLIFTDFLCMAPISFFAISASL. Topologically, residues 598–608 are extracellular; that stretch reads KVPLITVSKSK. A helical transmembrane segment spans residues 609 to 630; the sequence is ILLVLFYPINSCANPFLYAIFT. Residues 631–695 lie on the Cytoplasmic side of the membrane; sequence KNFRRDVFIL…LIPLSRLAQN (65 aa).

This sequence belongs to the G-protein coupled receptor 1 family. FSH/LSH/TSH subfamily. Homotrimer. Functions as a homotrimer binding the FSH hormone heterodimer composed of CGA and FSHB. Interacts with ARRB2. Interacts with APPL2; interaction is independent of follicle stimulating hormone stimulation. N-glycosylated; indirectly required for FSH-binding, possibly via a conformational change that allows high affinity binding of hormone. In terms of processing, sulfated.

It localises to the cell membrane. Its function is as follows. G protein-coupled receptor for follitropin, the follicle-stimulating hormone. Through cAMP production activates the downstream PI3K-AKT and ERK1/ERK2 signaling pathways. The sequence is that of Follicle-stimulating hormone receptor (FSHR) from Sus scrofa (Pig).